The primary structure comprises 208 residues: RNA chaperone ProQ (208 aa).

2 stretches are compositionally biased toward basic and acidic residues: residues 99–115 and 126–135; these read AQET…EKNK and PAKDKPENTA. Residues 99 to 149 are disordered; the sequence is AQETLKESKAKVAEKNKATNKAAAKKAPAKDKPENTAKAKPKTAKKPAKPK. A compositionally biased stretch (basic residues) spans 137 to 149; it reads AKPKTAKKPAKPK.

Belongs to the ProQ family.

The protein resides in the cytoplasm. Its function is as follows. RNA chaperone with significant RNA binding, RNA strand exchange and RNA duplexing activities. This chain is RNA chaperone ProQ, found in Idiomarina loihiensis (strain ATCC BAA-735 / DSM 15497 / L2-TR).